Reading from the N-terminus, the 357-residue chain is 3'-hydroxy-N-methyl-(S)-coclaurine 4'-O-methyltransferase 2 (357 aa).

Asp226 is a binding site for S-adenosyl-L-methionine. His264 functions as the Proton acceptor in the catalytic mechanism.

The protein belongs to the class I-like SAM-binding methyltransferase superfamily. Cation-independent O-methyltransferase family. COMT subfamily. Homodimer. Expressed in roots, stems, leaves and flowers.

It catalyses the reaction (S)-3'-hydroxy-N-methylcoclaurine + S-adenosyl-L-methionine = (S)-reticuline + S-adenosyl-L-homocysteine + H(+). The protein operates within alkaloid biosynthesis; (S)-reticuline biosynthesis; (S)-reticuline from (S)-norcoclaurine: step 4/4. Functionally, involved in the biosynthesis of benzylisoquinoline alkaloids. Catalyzes the transfer of the methyl group to the 4'-hydroxyl group of 3'-hydroxy-N-methylcoclaurine to form reticuline. Can also use laudanosoline and, with a lower activity, 6-O-methylnorlaudanosoline and norlaudanosoline as substrates. Also involved in the papaverine biosynthesis. This chain is 3'-hydroxy-N-methyl-(S)-coclaurine 4'-O-methyltransferase 2, found in Papaver somniferum (Opium poppy).